The chain runs to 513 residues: Cytochrome P450 monooxygenase CYP3 (513 aa).

Residues 1 to 21 (MLPRSLGHSTSELSPPFDGPN) are disordered. Cys451 provides a ligand contact to heme.

It belongs to the cytochrome P450 family. Requires heme as cofactor.

The protein operates within secondary metabolite biosynthesis. Functionally, cytochrome P450 monooxygenase; part of the gene cluster that mediates the biosynthesis of a tyrosine-derived cytochalasan acting as a fungal signal recognized by resistant rice plants and leads to avirulence in Pi33 resistant rice cultivars. The first step in the pathway is catalyzed by the hybrid PKS-NRPS ACE1, assisted by the enoyl reductase RAP1, that are responsible for fusion of the tyrosine precursor and the polyketide backbone. The polyketide synthase module (PKS) of ACE1 is responsible for the synthesis of the polyketide backbone and the downstream nonribosomal peptide synthetase (NRPS) amidates the carboxyl end of the polyketide with the tyrosine precursor. Because ACE1 lacks a designated enoylreductase (ER) domain, the required activity is provided the enoyl reductase RAP1. Reduction by the hydrolyase ORFZ, followed by dehydration and intra-molecular Diels-Alder cyclization by the Diels-Alderase ORF3 then yield the required isoindolone-fused macrocycle. A number of oxidative steps catalyzed by the tailoring enzymes identified within the cluster, including cytochrome P450 monooxygenases CYP1 to CYP4, the FAD-linked oxidoreductase OXR2 and the short-chain dehydrogenase/reductase OXR1, are further required to afford the final cytochalasans that confer avirulence and which have still to be identified. The monooxygenase CYP1 has been shown to be a site-selective C-18 hydroxylase whereas the function of CYP3 is the site-selective epoxidation of the C-6/C-7 olefin that is present in some intermediate compounds. Finally, SYN2 and RAP2 are not required for avirulence in Pi33 resistant rice cultivars. The protein is Cytochrome P450 monooxygenase CYP3 of Pyricularia oryzae (strain 70-15 / ATCC MYA-4617 / FGSC 8958) (Rice blast fungus).